A 482-amino-acid chain; its full sequence is Tripartite motif-containing protein 10 (482 aa).

Residues 16–61 (CPICQGTLREPVTIDCGHNFCCVCLTRYLEIPCLDPGELPTCPLCK) form an RING-type zinc finger. The segment at 95–136 (EEEDVCLEHREKVYYFCEDDEMQLCVVCREAWEHRHHTVRFL) adopts a B box-type zinc-finger fold. 4 residues coordinate Zn(2+): Cys-100, His-103, Cys-122, and His-128. In terms of domain architecture, B30.2/SPRY spans 293 to 482 (REMKTFLEKL…GRGSKFSLSS (190 aa)).

Belongs to the TRIM/RBCC family. As to quaternary structure, interacts with IFNAR1; this interaction prevents association of IFNAR1 with TYK2.

The protein resides in the cytoplasm. Functionally, E3 ligase that plays an essential role in the differentiation and survival of terminal erythroid cells. May directly bind to PTEN and promote its ubiquitination, resulting in its proteasomal degradation and activation of hypertrophic signaling. In addition, plays a role in immune response regulation by repressing the phosphorylation of STAT1 and STAT2 in the interferon/JAK/STAT signaling pathway independent of its E3 ligase activity. Mechanistically, interacts with the intracellular domain of IFNAR1 and thereby inhibits the association of TYK2 and IFNAR1. This Sus scrofa (Pig) protein is Tripartite motif-containing protein 10 (TRIM10).